The chain runs to 185 residues: Elongation factor P (185 aa).

This sequence belongs to the elongation factor P family.

The protein localises to the cytoplasm. The protein operates within protein biosynthesis; polypeptide chain elongation. In terms of biological role, involved in peptide bond synthesis. Stimulates efficient translation and peptide-bond synthesis on native or reconstituted 70S ribosomes in vitro. Probably functions indirectly by altering the affinity of the ribosome for aminoacyl-tRNA, thus increasing their reactivity as acceptors for peptidyl transferase. This is Elongation factor P from Dictyoglomus turgidum (strain DSM 6724 / Z-1310).